Reading from the N-terminus, the 718-residue chain is Kinesin-like protein KIF2C (718 aa).

A globular region spans residues 1-248 (MESLPARLFP…CHPLTLTDPT (248 aa)). Residues serine 3 and serine 19 each carry the phosphoserine modification. The interval 86-111 (PKQKRRSVNSKIPAPKEGLRSRSTRM) is disordered. Phosphoserine; by AURKB is present on serine 92. The Microtubule tip localization signal motif lies at 95 to 98 (SKIP). Phosphoserine is present on residues serine 106, serine 108, serine 112, serine 163, and serine 186. Positions 201–232 (EKRAQNSEIRIKRAQEYDSSFPNWEFARMIKE) are negative regulator of microtubule-binding. Residues 252–582 (RICVCVRKRP…LRYADRVKEL (331 aa)) form the Kinesin motor domain. ATP is bound by residues arginine 258 and 342–349 (GQTGSGKT). The short motif at 409–412 (KKAK) is the Nuclear localization signal element. Phosphoserine is present on residues serine 513 and serine 626. Coiled-coil stretches lie at residues 613–651 (NFKE…IIQQ) and 689–716 (ALRE…SKKR).

This sequence belongs to the TRAFAC class myosin-kinesin ATPase superfamily. Kinesin family. MCAK/KIF2 subfamily. As to quaternary structure, interacts with CENPH. Interacts with MTUS2/TIP150; the interaction is direct. Interacts with MAPRE1; the interaction is direct, regulated by phosphorylation and is probably required for targeting to growing microtubule plus ends. Interacts with KIF18B at microtubule tips; this interaction increases the affinity of both partners for microtubule plus ends and is required for robust microtubule depolymerization. Phosphorylation by AURKA or AURKB strongly reduces KIF18B-binding. Post-translationally, phosphorylation by AURKB, regulates association with centromeres and kinetochores and the microtubule depolymerization activity. In terms of processing, ubiquitinated.

The protein resides in the cytoplasm. It is found in the cytoskeleton. Its subcellular location is the nucleus. The protein localises to the chromosome. It localises to the centromere. The protein resides in the kinetochore. In terms of biological role, in complex with KIF18B, constitutes the major microtubule plus-end depolymerizing activity in mitotic cells. Regulates the turnover of microtubules at the kinetochore and functions in chromosome segregation during mitosis. Plays a role in chromosome congression and is required for the lateral to end-on conversion of the chromosome-microtubule attachment. The protein is Kinesin-like protein KIF2C (KIF2C) of Cricetulus griseus (Chinese hamster).